Reading from the N-terminus, the 349-residue chain is MDNEKLKAIDAAMSQIEKQFGKGAIMKLGEQDILNIDAISTGCLSLDIALGIGGVPRGRVVEIYGPESSGKTTVALHILAEAQKKGGAAAFIDAEHALDPQYARALGVDIDNLVVSQPDTGEQALEIAEALVRSGAIDVIVVDSVAALVPKAEIEGEMGDSHVGLQARLMSQALRKLTGSINKSKCIAIFINQLREKVGIMFGNPETTPGGRALKFYASVRMDIRKIDTIKQGEEMIGNRVRVKVVKNKVAPPFKQAEFDIMYNEGISREGNIVDVGVKENIIQKSGAWFSYGDIRLGQGRENAKLFFKENIDIRSEVENKIREKYDLPIQKVKNEKPKIEKGTENNTK.

Residue Gly-65–Thr-72 coordinates ATP.

The protein belongs to the RecA family.

The protein resides in the cytoplasm. Functionally, can catalyze the hydrolysis of ATP in the presence of single-stranded DNA, the ATP-dependent uptake of single-stranded DNA by duplex DNA, and the ATP-dependent hybridization of homologous single-stranded DNAs. It interacts with LexA causing its activation and leading to its autocatalytic cleavage. In Clostridium acetobutylicum (strain ATCC 824 / DSM 792 / JCM 1419 / IAM 19013 / LMG 5710 / NBRC 13948 / NRRL B-527 / VKM B-1787 / 2291 / W), this protein is Protein RecA.